A 467-amino-acid polypeptide reads, in one-letter code: Indoleacetamide hydrolase (467 aa).

Catalysis depends on charge relay system residues Lys-74 and Ser-149. The active-site Acyl-ester intermediate is Ser-173.

This sequence belongs to the amidase family.

It participates in plant hormone metabolism; auxin biosynthesis. Functionally, hydrolyzes indole-3-acetamide (IAM) into indole-3-acetic acid (IAA). In Agrobacterium vitis (Rhizobium vitis), this protein is Indoleacetamide hydrolase (TA-iaaH).